The chain runs to 123 residues: Succinate dehydrogenase assembly factor 3, mitochondrial (123 aa).

The N-terminal 31 residues, 1–31 (MANPAHISAVRTLYKKILVLHRFLPIDLRAL), are a transit peptide targeting the mitochondrion.

It belongs to the complex I LYR family. SDHAF3 subfamily. Interacts with sdhb within an sdha-sdhb subcomplex.

The protein resides in the mitochondrion matrix. Its function is as follows. Plays an essential role in the assembly of succinate dehydrogenase (SDH), an enzyme complex (also referred to as respiratory complex II) that is a component of both the tricarboxylic acid (TCA) cycle and the mitochondrial electron transport chain, and which couples the oxidation of succinate to fumarate with the reduction of ubiquinone (coenzyme Q) to ubiquinol. Promotes maturation of the iron-sulfur protein subunit sdhb of the SDH catalytic dimer, protecting it from the deleterious effects of oxidants. May act together with SDHAF1. In Danio rerio (Zebrafish), this protein is Succinate dehydrogenase assembly factor 3, mitochondrial.